The sequence spans 262 residues: Type II restriction enzyme MspI (262 aa).

The catalysed reaction is Endonucleolytic cleavage of DNA to give specific double-stranded fragments with terminal 5'-phosphates.. Its function is as follows. A P subtype restriction enzyme that recognizes the double-stranded sequence 5'-CCGG-3' and cleaves after C-1. The sequence is that of Type II restriction enzyme MspI (mspIR) from Moraxella sp.